A 378-amino-acid chain; its full sequence is 2-aminoethylphosphonate--pyruvate transaminase 1 (378 aa).

The residue at position 194 (Lys194) is an N6-(pyridoxal phosphate)lysine.

This sequence belongs to the class-V pyridoxal-phosphate-dependent aminotransferase family. PhnW subfamily. In terms of assembly, homodimer. Requires pyridoxal 5'-phosphate as cofactor.

The enzyme catalyses (2-aminoethyl)phosphonate + pyruvate = phosphonoacetaldehyde + L-alanine. Involved in phosphonate degradation. This chain is 2-aminoethylphosphonate--pyruvate transaminase 1, found in Cupriavidus pinatubonensis (strain JMP 134 / LMG 1197) (Cupriavidus necator (strain JMP 134)).